A 265-amino-acid polypeptide reads, in one-letter code: Expansin-like A2 (265 aa).

Residues 1 to 21 (MLQGFLFLLSVVLLFSSSAAA) form the signal peptide. One can recognise an Expansin-like EG45 domain in the interval 42 to 148 (SGACAYGSMA…RRVPCDYGNK (107 aa)). N-linked (GlcNAc...) asparagine glycosylation is found at N100 and N103. The 83-residue stretch at 162–244 (NYLAIKLLYQ…NWEAGKSYDA (83 aa)) folds into the Expansin-like CBD domain.

This sequence belongs to the expansin family. Expansin-like A subfamily.

Its subcellular location is the secreted. This Arabidopsis thaliana (Mouse-ear cress) protein is Expansin-like A2 (EXLA2).